The chain runs to 253 residues: Shikimate dehydrogenase (NADP(+)) (253 aa).

Shikimate contacts are provided by residues 13 to 15 (SIS) and Thr-59. Lys-63 (proton acceptor) is an active-site residue. Residue Glu-74 participates in NADP(+) binding. Residues Asn-83 and Asp-94 each contribute to the shikimate site. NADP(+) contacts are provided by residues 115–119 (GAGGA), 139–144 (NRTIER), and Val-199. Tyr-201 contributes to the shikimate binding site. NADP(+) is bound at residue Gly-221.

This sequence belongs to the shikimate dehydrogenase family. As to quaternary structure, homodimer.

The catalysed reaction is shikimate + NADP(+) = 3-dehydroshikimate + NADPH + H(+). The protein operates within metabolic intermediate biosynthesis; chorismate biosynthesis; chorismate from D-erythrose 4-phosphate and phosphoenolpyruvate: step 4/7. Its function is as follows. Involved in the biosynthesis of the chorismate, which leads to the biosynthesis of aromatic amino acids. Catalyzes the reversible NADPH linked reduction of 3-dehydroshikimate (DHSA) to yield shikimate (SA). The polypeptide is Shikimate dehydrogenase (NADP(+)) (Thermotoga maritima (strain ATCC 43589 / DSM 3109 / JCM 10099 / NBRC 100826 / MSB8)).